The primary structure comprises 72 residues: Translational regulator CsrA (72 aa).

It belongs to the CsrA/RsmA family. As to quaternary structure, homodimer; the beta-strands of each monomer intercalate to form a hydrophobic core, while the alpha-helices form wings that extend away from the core.

It is found in the cytoplasm. In terms of biological role, a translational regulator that binds mRNA to regulate translation initiation and/or mRNA stability. Usually binds in the 5'-UTR at or near the Shine-Dalgarno sequence preventing ribosome-binding, thus repressing translation. Its main target seems to be the major flagellin gene, while its function is anatagonized by FliW. The polypeptide is Translational regulator CsrA (Ruminiclostridium cellulolyticum (strain ATCC 35319 / DSM 5812 / JCM 6584 / H10) (Clostridium cellulolyticum)).